The following is a 632-amino-acid chain: Extracellular metalloproteinase 2 (632 aa).

An N-terminal signal peptide occupies residues 1 to 19 (MHGLLLAGLAAALPLGVAG). A propeptide spanning residues 20–244 (LPARQQSGLS…VHNVVDYVAS (225 aa)) is cleaved from the precursor. N-linked (GlcNAc...) asparagine glycosylation is present at Asn-270. Residue His-429 participates in Zn(2+) binding. Glu-430 is a catalytic residue. His-433 lines the Zn(2+) pocket.

Belongs to the peptidase M36 family. It depends on Zn(2+) as a cofactor.

The protein localises to the secreted. Functionally, secreted metalloproteinase that allows assimilation of proteinaceous substrates and probably acts as a virulence factor. This is Extracellular metalloproteinase 2 (MEP2) from Arthroderma gypseum (strain ATCC MYA-4604 / CBS 118893) (Microsporum gypseum).